The chain runs to 153 residues: Nascent polypeptide-associated complex subunit beta (153 aa).

2 disordered regions span residues 1–40 (MSDVQERLKKLGLGARTGTGKGTPRRKVKRAPARSGADDK) and 126–153 (LQKEKGEDDDEIPDLVEGENFEGEPKVE). Residues 23–32 (TPRRKVKRAP) show a composition bias toward basic residues. Residues 36–101 (GADDKKLQLA…GEDKELTELV (66 aa)) form the NAC-A/B domain. A compositionally biased stretch (acidic residues) spans 132–147 (EDDDEIPDLVEGENFE).

This sequence belongs to the NAC-beta family. Part of the nascent polypeptide-associated complex (NAC), consisting of EGD2 and EGD1. NAC associates with ribosomes via EGD1.

The protein localises to the cytoplasm. The protein resides in the nucleus. Its function is as follows. Component of the nascent polypeptide-associated complex (NAC), a dynamic component of the ribosomal exit tunnel, protecting the emerging polypeptides from interaction with other cytoplasmic proteins to ensure appropriate nascent protein targeting. The NAC complex also promotes mitochondrial protein import by enhancing productive ribosome interactions with the outer mitochondrial membrane and blocks the inappropriate interaction of ribosomes translating non-secretory nascent polypeptides with translocation sites in the membrane of the endoplasmic reticulum. EGD1 may act as a transcription factor that exert a negative effect on the expression of several genes that are transcribed by RNA polymerase II. In Gibberella zeae (strain ATCC MYA-4620 / CBS 123657 / FGSC 9075 / NRRL 31084 / PH-1) (Wheat head blight fungus), this protein is Nascent polypeptide-associated complex subunit beta (EGD1).